Here is a 141-residue protein sequence, read N- to C-terminus: Galactose-6-phosphate isomerase subunit LacA 1 (141 aa).

It belongs to the LacAB/RpiB family. Heteromultimeric protein consisting of LacA and LacB.

The enzyme catalyses aldehydo-D-galactose 6-phosphate = keto-D-tagatose 6-phosphate. The protein operates within carbohydrate metabolism; D-galactose 6-phosphate degradation; D-tagatose 6-phosphate from D-galactose 6-phosphate: step 1/1. The polypeptide is Galactose-6-phosphate isomerase subunit LacA 1 (Streptococcus pyogenes serotype M6 (strain ATCC BAA-946 / MGAS10394)).